Here is a 142-residue protein sequence, read N- to C-terminus: HTH-type transcriptional regulator MntR (142 aa).

The 63-residue stretch at 1–63 folds into the HTH dtxR-type domain; sequence MTTPSMEDYI…YEKYRGLVLT (63 aa). Mn(2+) is bound by residues D8, E11, H77, E99, E102, and H103.

The protein belongs to the DtxR/MntR family. In terms of assembly, homodimer.

It localises to the cytoplasm. DNA binding is strongly activated by Mn(2+). Functionally, central regulator of manganese homeostasis. This is HTH-type transcriptional regulator MntR from Bacillus velezensis (strain DSM 23117 / BGSC 10A6 / LMG 26770 / FZB42) (Bacillus amyloliquefaciens subsp. plantarum).